We begin with the raw amino-acid sequence, 388 residues long: tRNA 2-selenouridine synthase (388 aa).

The region spanning 15-138 (FTADTPLIDV…ARQFLINTID (124 aa)) is the Rhodanese domain. The active-site S-selanylcysteine intermediate is the Cys98.

Belongs to the SelU family. Monomer.

The enzyme catalyses 5-methylaminomethyl-2-thiouridine(34) in tRNA + selenophosphate + (2E)-geranyl diphosphate + H2O + H(+) = 5-methylaminomethyl-2-selenouridine(34) in tRNA + (2E)-thiogeraniol + phosphate + diphosphate. It catalyses the reaction 5-methylaminomethyl-2-thiouridine(34) in tRNA + (2E)-geranyl diphosphate = 5-methylaminomethyl-S-(2E)-geranyl-thiouridine(34) in tRNA + diphosphate. It carries out the reaction 5-methylaminomethyl-S-(2E)-geranyl-thiouridine(34) in tRNA + selenophosphate + H(+) = 5-methylaminomethyl-2-(Se-phospho)selenouridine(34) in tRNA + (2E)-thiogeraniol. The catalysed reaction is 5-methylaminomethyl-2-(Se-phospho)selenouridine(34) in tRNA + H2O = 5-methylaminomethyl-2-selenouridine(34) in tRNA + phosphate. Functionally, involved in the post-transcriptional modification of the uridine at the wobble position (U34) of tRNA(Lys), tRNA(Glu) and tRNA(Gln). Catalyzes the conversion of 2-thiouridine (S2U-RNA) to 2-selenouridine (Se2U-RNA). Acts in a two-step process involving geranylation of 2-thiouridine (S2U) to S-geranyl-2-thiouridine (geS2U) and subsequent selenation of the latter derivative to 2-selenouridine (Se2U) in the tRNA chain. This chain is tRNA 2-selenouridine synthase, found in Nitrosomonas eutropha (strain DSM 101675 / C91 / Nm57).